The chain runs to 137 residues: Small ribosomal subunit protein uS12 (137 aa).

The interval 1–44 (MPTINQLVRKGRKSRTSKSDAPALNFGYNSMKKKATDNPAPQKR) is disordered. A 3-methylthioaspartic acid modification is found at aspartate 102.

This sequence belongs to the universal ribosomal protein uS12 family. In terms of assembly, part of the 30S ribosomal subunit. Contacts proteins S8 and S17. May interact with IF1 in the 30S initiation complex.

Functionally, with S4 and S5 plays an important role in translational accuracy. Interacts with and stabilizes bases of the 16S rRNA that are involved in tRNA selection in the A site and with the mRNA backbone. Located at the interface of the 30S and 50S subunits, it traverses the body of the 30S subunit contacting proteins on the other side and probably holding the rRNA structure together. The combined cluster of proteins S8, S12 and S17 appears to hold together the shoulder and platform of the 30S subunit. The sequence is that of Small ribosomal subunit protein uS12 from Latilactobacillus sakei subsp. sakei (strain 23K) (Lactobacillus sakei subsp. sakei).